The sequence spans 256 residues: 5-keto-4-deoxy-D-glucarate aldolase (256 aa).

Histidine 50 functions as the Proton acceptor in the catalytic mechanism. Substrate is bound at residue glutamine 151. Glutamate 153 serves as a coordination point for Mg(2+). Serine 178 and aspartate 179 together coordinate substrate. Aspartate 179 provides a ligand contact to Mg(2+).

This sequence belongs to the HpcH/HpaI aldolase family. KDGluc aldolase subfamily. As to quaternary structure, homohexamer; trimer of dimers. It depends on Mg(2+) as a cofactor.

It carries out the reaction 5-dehydro-4-deoxy-D-glucarate = 2-hydroxy-3-oxopropanoate + pyruvate. The enzyme catalyses 2-dehydro-3-deoxy-D-glucarate = 2-hydroxy-3-oxopropanoate + pyruvate. It participates in carbohydrate acid metabolism; galactarate degradation; D-glycerate from galactarate: step 2/3. Catalyzes the reversible retro-aldol cleavage of both 5-keto-4-deoxy-D-glucarate and 2-keto-3-deoxy-D-glucarate to pyruvate and tartronic semialdehyde. The chain is 5-keto-4-deoxy-D-glucarate aldolase from Escherichia coli (strain ATCC 8739 / DSM 1576 / NBRC 3972 / NCIMB 8545 / WDCM 00012 / Crooks).